Consider the following 357-residue polypeptide: Holliday junction branch migration complex subunit RuvB (357 aa).

Positions 1 to 27 (MGRFDDAGAQDAEPDDRDVSPALTVGE) are disordered. The interval 1 to 195 (MGRFDDAGAQ…FGFTAHMDFY (195 aa)) is large ATPase domain (RuvB-L). Residues L34, R35, G76, K79, T80, S81, 142–144 (EDF), R185, Y195, and R232 each bind ATP. Residue T80 coordinates Mg(2+). The tract at residues 196–266 (EPAELERVLA…IAKAALEVYD (71 aa)) is small ATPAse domain (RuvB-S). The interval 269–357 (ELGLDRLDRA…TGLGQTGLFD (89 aa)) is head domain (RuvB-H). The DNA site is built by R324 and R329.

It belongs to the RuvB family. As to quaternary structure, homohexamer. Forms an RuvA(8)-RuvB(12)-Holliday junction (HJ) complex. HJ DNA is sandwiched between 2 RuvA tetramers; dsDNA enters through RuvA and exits via RuvB. An RuvB hexamer assembles on each DNA strand where it exits the tetramer. Each RuvB hexamer is contacted by two RuvA subunits (via domain III) on 2 adjacent RuvB subunits; this complex drives branch migration. In the full resolvosome a probable DNA-RuvA(4)-RuvB(12)-RuvC(2) complex forms which resolves the HJ.

The protein resides in the cytoplasm. It catalyses the reaction ATP + H2O = ADP + phosphate + H(+). Its function is as follows. The RuvA-RuvB-RuvC complex processes Holliday junction (HJ) DNA during genetic recombination and DNA repair, while the RuvA-RuvB complex plays an important role in the rescue of blocked DNA replication forks via replication fork reversal (RFR). RuvA specifically binds to HJ cruciform DNA, conferring on it an open structure. The RuvB hexamer acts as an ATP-dependent pump, pulling dsDNA into and through the RuvAB complex. RuvB forms 2 homohexamers on either side of HJ DNA bound by 1 or 2 RuvA tetramers; 4 subunits per hexamer contact DNA at a time. Coordinated motions by a converter formed by DNA-disengaged RuvB subunits stimulates ATP hydrolysis and nucleotide exchange. Immobilization of the converter enables RuvB to convert the ATP-contained energy into a lever motion, pulling 2 nucleotides of DNA out of the RuvA tetramer per ATP hydrolyzed, thus driving DNA branch migration. The RuvB motors rotate together with the DNA substrate, which together with the progressing nucleotide cycle form the mechanistic basis for DNA recombination by continuous HJ branch migration. Branch migration allows RuvC to scan DNA until it finds its consensus sequence, where it cleaves and resolves cruciform DNA. The chain is Holliday junction branch migration complex subunit RuvB from Mycobacterium sp. (strain JLS).